Here is a 308-residue protein sequence, read N- to C-terminus: Ribosomal RNA small subunit methyltransferase H (308 aa).

Residues 33 to 35 (GGH), aspartate 52, tyrosine 81, aspartate 99, and glutamine 106 contribute to the S-adenosyl-L-methionine site.

This sequence belongs to the methyltransferase superfamily. RsmH family.

The protein resides in the cytoplasm. The enzyme catalyses cytidine(1402) in 16S rRNA + S-adenosyl-L-methionine = N(4)-methylcytidine(1402) in 16S rRNA + S-adenosyl-L-homocysteine + H(+). Specifically methylates the N4 position of cytidine in position 1402 (C1402) of 16S rRNA. This is Ribosomal RNA small subunit methyltransferase H from Francisella philomiragia subsp. philomiragia (strain ATCC 25017 / CCUG 19701 / FSC 153 / O#319-036).